Reading from the N-terminus, the 397-residue chain is 8-amino-7-oxononanoate synthase (397 aa).

Arg-23 contacts substrate. 110 to 111 provides a ligand contact to pyridoxal 5'-phosphate; that stretch reads GY. His-135 provides a ligand contact to substrate. Pyridoxal 5'-phosphate is bound by residues Ser-181, His-209, and Thr-237. Lys-240 bears the N6-(pyridoxal phosphate)lysine mark. A substrate-binding site is contributed by Thr-354.

The protein belongs to the class-II pyridoxal-phosphate-dependent aminotransferase family. BioF subfamily. In terms of assembly, homodimer. The cofactor is pyridoxal 5'-phosphate.

It carries out the reaction 6-carboxyhexanoyl-[ACP] + L-alanine + H(+) = (8S)-8-amino-7-oxononanoate + holo-[ACP] + CO2. It participates in cofactor biosynthesis; biotin biosynthesis. Its function is as follows. Catalyzes the decarboxylative condensation of pimeloyl-[acyl-carrier protein] and L-alanine to produce 8-amino-7-oxononanoate (AON), [acyl-carrier protein], and carbon dioxide. The polypeptide is 8-amino-7-oxononanoate synthase (Anaeromyxobacter sp. (strain Fw109-5)).